The following is a 440-amino-acid chain: Origin recognition complex subunit 4 (440 aa).

64–71 (GPKGSGKS) serves as a coordination point for ATP.

Belongs to the ORC4 family. As to quaternary structure, ORC is composed of six subunits.

It localises to the nucleus. Component of the origin recognition complex (ORC) that binds origins of replication. DNA-binding is ATP-dependent, however specific DNA sequences that define origins of replication have not been identified so far. ORC is required to assemble the pre-replication complex necessary to initiate DNA replication. This chain is Origin recognition complex subunit 4 (orcD), found in Dictyostelium discoideum (Social amoeba).